A 272-amino-acid chain; its full sequence is Thymidine phosphorylase (272 aa).

Belongs to the thymidine/pyrimidine-nucleoside phosphorylase family. As to quaternary structure, homodimer.

The catalysed reaction is thymidine + phosphate = 2-deoxy-alpha-D-ribose 1-phosphate + thymine. Its function is as follows. The enzymes which catalyze the reversible phosphorolysis of pyrimidine nucleosides are involved in the degradation of these compounds and in their utilization as carbon and energy sources, or in the rescue of pyrimidine bases for nucleotide synthesis. The chain is Thymidine phosphorylase (deoA) from Metamycoplasma hominis (Mycoplasma hominis).